A 1043-amino-acid polypeptide reads, in one-letter code: MENAHTKTVEEVLGHFGVNESTGLSLEQVKKLKERWGSNELPAEEGKTLLELVIEQFEDLLVRILLLAACISFVLAWFEEGEETITAFVEPFVILLILVANAIVGVWQERNAENAIEALKEYEPEMGKVYRQDRKSVQRIKAKDIVPGDIVEIAVGDKVPADIRLTSIKSTTLRVDQSILTGESVSVIKHTDPVPDPRAVNQDKKNMLFSGTNIAAGKAMGVVVATGVNTEIGKIRDEMVATEQERTPLQQKLDEFGEQLSKVISLICIAVWIINIGHFNDPVHGGSWIRGAIYYFKIAVALAVAAIPEGLPAVITTCLALGTRRMAKKNAIVRSLPSVETLGCTSVICSDKTGTLTTNQMSVCRMFILDKVEGDTCSLNEFTITGSTYAPIGEVQKDDKPVKCHQYDGLVELATICALCNDSALDYNEAKGVYEKVGEATETALTCLVEKMNVFDTELKGLSKIERANACNSVIKQLMKKEFTLEFSRDRKSMSVYCTPNKPSRTSMSKMFVKGAPEGVIDRCTHIRVGSTKVPMTPGVKQKIMSVIREWGSGSDTLRCLALATHDNPLRREEMHLEDSANFIKYETNLTFVGCVGMLDPPRIEVASSVKLCRQAGIRVIMITGDNKGTAVAICRRIGIFGQDEDVTSKAFTGREFDELSPSAQRDACLNARCFARVEPSHKSKIVEFLQSFDEITAMTGDGVNDAPALKKSEIGIAMGSGTAVAKTASEMVLADDNFSTIVAAVEEGRAIYNNMKQFIRYLISSNVGEVVCIFLTAALGFPEALIPVQLLWVNLVTDGLPATALGFNPPDLDIMNKPPRNPKEPLISGWLFFRYLAIGCYVGAATVGAAAWWFIAADGGPRVSFYQLSHFLQCKEDNPDFEGVDCAIFESPYPMTMALSVLVTIEMCNALNSLSENQSLLRMPPWENIWLVGSICLSMSLHFLILYVEPLPLIFQITPLNLTQWLMVLKISLPVILMDETLKFVARNYLEPGKECAQPATKPSCSLSACTDGISWPFVLLIMPLVVWVYSTDTNFSDMFWS.

Residues 1-48 (MENAHTKTVEEVLGHFGVNESTGLSLEQVKKLKERWGSNELPAEEGKT) lie on the Cytoplasmic side of the membrane. A Phosphoserine modification is found at S38. The helical transmembrane segment at 49-69 (LLELVIEQFEDLLVRILLLAA) threads the bilayer. Over 70 to 89 (CISFVLAWFEEGEETITAFV) the chain is Lumenal. Residues 90–110 (EPFVILLILVANAIVGVWQER) traverse the membrane as a helical segment. The Cytoplasmic portion of the chain corresponds to 111–253 (NAENAIEALK…QERTPLQQKL (143 aa)). A helical membrane pass occupies residues 254 to 273 (DEFGEQLSKVISLICIAVWI). The Lumenal portion of the chain corresponds to 274–295 (INIGHFNDPVHGGSWIRGAIYY). Residues Y294 and Y295 each carry the 3'-nitrotyrosine modification. Residues 296-313 (FKIAVALAVAAIPEGLPA) traverse the membrane as a helical segment. Ca(2+)-binding residues include V304, A305, I307, and E309. Residues 314–756 (VITTCLALGT…EEGRAIYNNM (443 aa)) are Cytoplasmic-facing. The 4-aspartylphosphate intermediate role is filled by D351. Mg(2+)-binding residues include D351 and T353. An ATP-binding site is contributed by T353. T441 is modified (phosphothreonine). Residues E442, R489, and K514 each coordinate ATP. S531 is modified (phosphoserine). ATP is bound at residue R559. Residues 575–594 (MHLEDSANFIKYETNLTFVG) form an interaction with HAX1 region. S580 carries the phosphoserine modification. ATP is bound by residues T624, G625, and D626. Residues S661 and S663 each carry the phosphoserine modification. ATP contacts are provided by R677 and K683. Position 702 (D702) interacts with Mg(2+). Residue N705 coordinates ATP. Residues 757-776 (KQFIRYLISSNVGEVVCIFL) traverse the membrane as a helical segment. Positions 767 and 770 each coordinate Ca(2+). Over 777 to 786 (TAALGFPEAL) the chain is Lumenal. Residues 787–807 (IPVQLLWVNLVTDGLPATALG) form a helical membrane-spanning segment. An interaction with PLN region spans residues 787–807 (IPVQLLWVNLVTDGLPATALG). The tract at residues 788 to 1043 (PVQLLWVNLV…DTNFSDMFWS (256 aa)) is interaction with TMEM64 and PDIA3. N795, T798, and D799 together coordinate Ca(2+). Residues 808-827 (FNPPDLDIMNKPPRNPKEPL) are Cytoplasmic-facing. Residues 828–850 (ISGWLFFRYLAIGCYVGAATVGA) form a helical membrane-spanning segment. The Lumenal portion of the chain corresponds to 851-896 (AAWWFIAADGGPRVSFYQLSHFLQCKEDNPDFEGVDCAIFESPYPM). The cysteines at positions 875 and 887 are disulfide-linked. Residues 897–916 (TMALSVLVTIEMCNALNSLS) form a helical membrane-spanning segment. E907 lines the Ca(2+) pocket. Topologically, residues 917–929 (ENQSLLRMPPWEN) are cytoplasmic. A helical transmembrane segment spans residues 930-948 (IWLVGSICLSMSLHFLILY). Residues 931–942 (WLVGSICLSMSL) form an interaction with PLN region. The Lumenal segment spans residues 949–963 (VEPLPLIFQITPLNL). A helical transmembrane segment spans residues 964–984 (TQWLMVLKISLPVILMDETLK). Topologically, residues 985 to 1043 (FVARNYLEPGKECAQPATKPSCSLSACTDGISWPFVLLIMPLVVWVYSTDTNFSDMFWS) are cytoplasmic.

It belongs to the cation transport ATPase (P-type) (TC 3.A.3) family. Type IIA subfamily. As to quaternary structure, interacts with sarcolipin (SLN); the interaction inhibits ATP2A2 Ca(2+) affinity. Interacts with phospholamban (PLN); the interaction inhibits ATP2A2 Ca(2+) affinity. Interacts with myoregulin (MRLN). Interacts with ARLN and ERLN; the interactions inhibit ATP2A2 Ca(2+) affinity. Interacts with STRIT1/DWORF; the interaction results in activation of ATP2A2. Interacts with the monomeric forms of SLN, PLN, ARLN, ERLN and STRI1/DWORF. Interacts with HAX1. Interacts with S100A8 and S100A9. Interacts with SLC35G1 and STIM1. Interacts with TMEM203. Interacts with TMEM64 and PDIA3. Interacts with TMX1. Interacts with TMX2. Interacts with VMP1; VMP1 competes with PLN and SLN to prevent them from forming an inhibitory complex with ATP2A2. Interacts with ULK1. Interacts with S100A1 in a Ca(2+)-dependent manner. Interacts with TUNAR. Interacts with FLVCR2; this interaction occurs in the absence of heme and promotes ATP2A2 proteasomal degradation; this complex is dissociated upon heme binding. Interacts with FNIP1. In terms of assembly, interacts with TRAM2 (via C-terminus). Mg(2+) is required as a cofactor. In terms of processing, nitrated under oxidative stress. Nitration on the two tyrosine residues inhibits catalytic activity. Serotonylated on Gln residues by TGM2 in response to hypoxia, leading to its inactivation. In terms of tissue distribution, isoform 2 is highly expressed in heart and slow twitch skeletal muscle. Isoform 1 is widely expressed.

The protein localises to the endoplasmic reticulum membrane. It localises to the sarcoplasmic reticulum membrane. The catalysed reaction is Ca(2+)(in) + ATP + H2O = Ca(2+)(out) + ADP + phosphate + H(+). Has different conformational states with differential Ca2+ affinity. The E1 conformational state (active form) shows high Ca(2+) affinity, while the E2 state exhibits low Ca(2+) affinity. Binding of ATP allosterically increases its affinity for subsequent binding of Ca2+. Reversibly inhibited by phospholamban (PLN) at low calcium concentrations. PLN inhibits ATP2A2 Ca(2+) affinity by disrupting its allosteric activation by ATP. Inhibited by sarcolipin (SLN) and myoregulin (MRLN). The inhibition is blocked by VMP1. Enhanced by STRIT1/DWORF; STRIT1 increases activity by displacing sarcolipin (SLN), phospholamban (PLN) and myoregulin (MRLN). Stabilizes SERCA2 in its E2 state. Its function is as follows. This magnesium-dependent enzyme catalyzes the hydrolysis of ATP coupled with the translocation of calcium from the cytosol to the sarcoplasmic reticulum lumen. Involved in autophagy in response to starvation. Upon interaction with VMP1 and activation, controls ER-isolation membrane contacts for autophagosome formation. Also modulates ER contacts with lipid droplets, mitochondria and endosomes. In coordination with FLVCR2 mediates heme-stimulated switching from mitochondrial ATP synthesis to thermogenesis. Functionally, involved in the regulation of the contraction/relaxation cycle. Acts as a regulator of TNFSF11-mediated Ca(2+) signaling pathways via its interaction with TMEM64 which is critical for the TNFSF11-induced CREB1 activation and mitochondrial ROS generation necessary for proper osteoclast generation. Association between TMEM64 and SERCA2 in the ER leads to cytosolic Ca(2+) spiking for activation of NFATC1 and production of mitochondrial ROS, thereby triggering Ca(2+) signaling cascades that promote osteoclast differentiation and activation. In Rattus norvegicus (Rat), this protein is Sarcoplasmic/endoplasmic reticulum calcium ATPase 2 (Atp2a2).